The chain runs to 786 residues: LPS-assembly protein LptD (786 aa).

Residues 1 to 39 (MPPKPLFPNVFPGDGAPRKRRLALALLAVPGLVPAVSYA) form the signal peptide. Residues 767-786 (PGYTPLPPPPPPMSRFSNYE) are disordered. Over residues 770-779 (TPLPPPPPPM) the composition is skewed to pro residues.

It belongs to the LptD family. As to quaternary structure, component of the lipopolysaccharide transport and assembly complex. Interacts with LptE and LptA.

Its subcellular location is the cell outer membrane. Together with LptE, is involved in the assembly of lipopolysaccharide (LPS) at the surface of the outer membrane. The polypeptide is LPS-assembly protein LptD (Burkholderia lata (strain ATCC 17760 / DSM 23089 / LMG 22485 / NCIMB 9086 / R18194 / 383)).